The chain runs to 320 residues: Protein phosphatase PTC7 homolog fig (320 aa).

A PPM-type phosphatase domain is found at 49 to 315 (PYLVTAVQGR…DDITLILASV (267 aa)). Residues Asp-93, Gly-94, and Asp-238 each contribute to the Mn(2+) site.

The protein belongs to the PP2C family. Mg(2+) serves as cofactor. Mn(2+) is required as a cofactor.

It carries out the reaction O-phospho-L-seryl-[protein] + H2O = L-seryl-[protein] + phosphate. The catalysed reaction is O-phospho-L-threonyl-[protein] + H2O = L-threonyl-[protein] + phosphate. This Drosophila yakuba (Fruit fly) protein is Protein phosphatase PTC7 homolog fig.